Consider the following 338-residue polypeptide: Ketol-acid reductoisomerase (NADP(+)) (338 aa).

In terms of domain architecture, KARI N-terminal Rossmann spans 1 to 181 (MKVFYDKDAD…GGGRAGIIET (181 aa)). NADP(+) is bound by residues 24–27 (YGSQ), Arg-47, and Ser-52. Residue His-107 is part of the active site. Gly-133 serves as a coordination point for NADP(+). A KARI C-terminal knotted domain is found at 182 to 327 (NFREETETDL…EKLRAMMPWI (146 aa)). Residues Asp-190, Glu-194, Glu-226, and Glu-230 each coordinate Mg(2+). Ser-251 is a binding site for substrate.

It belongs to the ketol-acid reductoisomerase family. The cofactor is Mg(2+).

The catalysed reaction is (2R)-2,3-dihydroxy-3-methylbutanoate + NADP(+) = (2S)-2-acetolactate + NADPH + H(+). It catalyses the reaction (2R,3R)-2,3-dihydroxy-3-methylpentanoate + NADP(+) = (S)-2-ethyl-2-hydroxy-3-oxobutanoate + NADPH + H(+). It functions in the pathway amino-acid biosynthesis; L-isoleucine biosynthesis; L-isoleucine from 2-oxobutanoate: step 2/4. Its pathway is amino-acid biosynthesis; L-valine biosynthesis; L-valine from pyruvate: step 2/4. Functionally, involved in the biosynthesis of branched-chain amino acids (BCAA). Catalyzes an alkyl-migration followed by a ketol-acid reduction of (S)-2-acetolactate (S2AL) to yield (R)-2,3-dihydroxy-isovalerate. In the isomerase reaction, S2AL is rearranged via a Mg-dependent methyl migration to produce 3-hydroxy-3-methyl-2-ketobutyrate (HMKB). In the reductase reaction, this 2-ketoacid undergoes a metal-dependent reduction by NADPH to yield (R)-2,3-dihydroxy-isovalerate. This chain is Ketol-acid reductoisomerase (NADP(+)), found in Cupriavidus pinatubonensis (strain JMP 134 / LMG 1197) (Cupriavidus necator (strain JMP 134)).